Consider the following 460-residue polypeptide: Cysteine--tRNA ligase (460 aa).

Cys28 provides a ligand contact to Zn(2+). The 'HIGH' region signature appears at 30–40; sequence VTIYDLCHIGH. The Zn(2+) site is built by Cys209, His234, and Glu238. Residues 266-270 carry the 'KMSKS' region motif; it reads KMSKS. ATP is bound at residue Lys269.

Belongs to the class-I aminoacyl-tRNA synthetase family. Monomer. Zn(2+) serves as cofactor.

It localises to the cytoplasm. It catalyses the reaction tRNA(Cys) + L-cysteine + ATP = L-cysteinyl-tRNA(Cys) + AMP + diphosphate. This chain is Cysteine--tRNA ligase, found in Vibrio vulnificus (strain YJ016).